A 317-amino-acid polypeptide reads, in one-letter code: MVELSDYQRQEKVGEGTYGVVYKALDTKHNNRVVALKKIRLESEDEGVPSTAIREISLLKEMKDDNIVRLYDIIHSDSHKLYLVFEFLDLDLKKYMESIPQGVGLGANMIKRFMNQLIRGIKHCHSHRVLHRDLKPQNLLIDKEGNLKLADFGLARAFGVPLRAYTHEVVTLWYRAPEILLGGKQYSTGVDMWSVGCIFAEMCNRKPLFPGDSEIDEIFRIFRILGTPNEEIWPDVNYLPDFKSSFPQWKKKPLSEAVPSLDANGIDLLDQMLVYDPSRRISAKRALIHPYFNDNDDRDHNNYNEDNIGIDKHQNMQ.

One can recognise a Protein kinase domain in the interval 7-292; it reads YQRQEKVGEG…AKRALIHPYF (286 aa). ATP-binding positions include 13 to 21 and Lys37; that span reads VGEGTYGVV. Residue Thr17 is modified to Phosphothreonine. Tyr18 bears the Phosphotyrosine; by SWE1 mark. Residue Asp133 is the Proton acceptor of the active site. Position 166 is a phosphothreonine; by CAK (Thr166). The segment at 296–317 is disordered; that stretch reads DDRDHNNYNEDNIGIDKHQNMQ.

Belongs to the protein kinase superfamily. CMGC Ser/Thr protein kinase family. CDC2/CDKX subfamily. In terms of assembly, forms several complexes with cyclins CCN1, CLB2, CLN3, and HGC1. The CDC28-CCN1 complex associates with septin CDC11 upon hyphal induction. Interacts with IQG1, RFA2, and HSP90. Post-translationally, phosphorylated at Tyr-18 by SWE1 in a cell cycle-dependent manner. Yeast-form and hyphal cells display similar dynamics of phosphorylation and dephosphorylation of Tyr-18. Tyr-18 phosphorylation leads to inhibition of CDC28 kinase activity.

The enzyme catalyses L-seryl-[protein] + ATP = O-phospho-L-seryl-[protein] + ADP + H(+). It carries out the reaction L-threonyl-[protein] + ATP = O-phospho-L-threonyl-[protein] + ADP + H(+). Its activity is regulated as follows. Phosphorylation at Thr-17 or Tyr-18 inactivates the enzyme, while phosphorylation at Thr-166 activates it. In terms of biological role, cyclin-dependent kinase that acts as a master regulator of the mitotic and meiotic cell cycles. May drive the G1-S transition. Plays a role in mitotic exit. Plays a role in the expression of morphology-related transcription factors, and especially hyphae-specific genes. Binds distinct cyclin subunits as cells progress through the division cycle or flamentous growth. The CDC28-CLB2 complex regulates cytokinesis partly by phosphorylating the actomyosin ring component IQG1. The CDC28-CLN3 complex phosphorylates SLA1 which regulates cortical actin patch dynamics. The CDC28-CCN1 complex phosphorylates CDC11 and SEC2 upon induction of filamentous growth. The CDC28-HGC1 complex also phosphorylates SEC2 and maintains CDC11 phosphorylation throughout hyphal growth. Moreover, the CDC28-HGC1 complex phosphorylates and prevents RGA2 from localizing to hyphal tips, leading to localized CDC42 activation for hyphal extension. CDC28-HGC1 phosphorylation of EFG1 represses cell separation genes during hyphal growth. Additional substrates for CDC28 are RFA2 in G1-phase; MOB2, which is required for the maintenance of polarisome components and for inhibition of cell separation in hyphae; and GIN4 to regulate its association to SEP7 and subsequent septin ring assembly. This Candida albicans (strain SC5314 / ATCC MYA-2876) (Yeast) protein is Cyclin-dependent kinase 1.